A 293-amino-acid chain; its full sequence is MTLIDGKAISEQVKQEIAAEVAEIVARGGKRPHLAAILVGHDGGSETYVAAKVKACEVCGFKSSLIRYESDVTEEELLAKVRELNNDDDVDGFIVQLPLPKHISEQKVIETIDYRKDVDGFHPINVGRMSIGLPCYVSATPNGILELLKRYEIETSGKKCVVLGRSNIVGKPMASLMMQKAYPGDATVTVCHSRSKDLVKECQEADIIIAALGQPNFVKEEMVKEGAVVIDVGTTRVPDASKKSGFKLTGDVKFDEVAPKCSFITPVPGGVGPMTIVSLMKNTLLAGKKAIYK.

Residues 164–166 (GRS), serine 193, and threonine 234 each bind NADP(+).

Belongs to the tetrahydrofolate dehydrogenase/cyclohydrolase family. As to quaternary structure, homodimer.

The catalysed reaction is (6R)-5,10-methylene-5,6,7,8-tetrahydrofolate + NADP(+) = (6R)-5,10-methenyltetrahydrofolate + NADPH. It carries out the reaction (6R)-5,10-methenyltetrahydrofolate + H2O = (6R)-10-formyltetrahydrofolate + H(+). Its pathway is one-carbon metabolism; tetrahydrofolate interconversion. Its function is as follows. Catalyzes the oxidation of 5,10-methylenetetrahydrofolate to 5,10-methenyltetrahydrofolate and then the hydrolysis of 5,10-methenyltetrahydrofolate to 10-formyltetrahydrofolate. The protein is Bifunctional protein FolD of Bacteroides thetaiotaomicron (strain ATCC 29148 / DSM 2079 / JCM 5827 / CCUG 10774 / NCTC 10582 / VPI-5482 / E50).